A 210-amino-acid polypeptide reads, in one-letter code: MAAPAPRARTGGKKKDERRGFKGYKWEFRDSNKDFWAQGHAECKSLIMILLIAAMVCFQRVATHPIVILLLTMELSICAFFFFLYSLAINRYIPFVFWPMMDLMNDLACSTFLIGGIFFALEARRELPVPYLTGMILMGVTAFISIIDLCLQRRQFKSRKLRKFILLTPDRKGKKQDPKLLLMLAAKEDEEERQRELAEKAKRESMDPGW.

Helical transmembrane passes span 35–55 (FWAQ…IAAM), 65–85 (PIVI…FFLY), 103–123 (LMND…ALEA), and 127–147 (LPVP…ISII). One can recognise an MARVEL domain in the interval 35–157 (FWAQGHAECK…DLCLQRRQFK (123 aa)).

The protein belongs to the chemokine-like factor family.

It is found in the membrane. The chain is CKLF-like MARVEL transmembrane domain-containing protein 2B (Cmtm2b) from Mus musculus (Mouse).